Consider the following 281-residue polypeptide: ATP phosphoribosyltransferase (281 aa).

Belongs to the ATP phosphoribosyltransferase family. Long subfamily. Requires Mg(2+) as cofactor.

The protein resides in the cytoplasm. It catalyses the reaction 1-(5-phospho-beta-D-ribosyl)-ATP + diphosphate = 5-phospho-alpha-D-ribose 1-diphosphate + ATP. The protein operates within amino-acid biosynthesis; L-histidine biosynthesis; L-histidine from 5-phospho-alpha-D-ribose 1-diphosphate: step 1/9. Feedback inhibited by histidine. In terms of biological role, catalyzes the condensation of ATP and 5-phosphoribose 1-diphosphate to form N'-(5'-phosphoribosyl)-ATP (PR-ATP). Has a crucial role in the pathway because the rate of histidine biosynthesis seems to be controlled primarily by regulation of HisG enzymatic activity. This chain is ATP phosphoribosyltransferase, found in Natronomonas pharaonis (strain ATCC 35678 / DSM 2160 / CIP 103997 / JCM 8858 / NBRC 14720 / NCIMB 2260 / Gabara) (Halobacterium pharaonis).